The following is a 728-amino-acid chain: Polyribonucleotide nucleotidyltransferase (728 aa).

Mg(2+) is bound by residues Asp513 and Asp519. Residues 580-640 (PKVKMILIKP…EIVDLTVTYI (61 aa)) form the KH domain. Residues 650–724 (ENVYEVKILR…ERGQIDLSKK (75 aa)) form the S1 motif domain.

The protein belongs to the polyribonucleotide nucleotidyltransferase family. Mg(2+) serves as cofactor.

The protein resides in the cytoplasm. The enzyme catalyses RNA(n+1) + phosphate = RNA(n) + a ribonucleoside 5'-diphosphate. In terms of biological role, involved in mRNA degradation. Catalyzes the phosphorolysis of single-stranded polyribonucleotides processively in the 3'- to 5'-direction. This is Polyribonucleotide nucleotidyltransferase from Phytoplasma mali (strain AT).